The sequence spans 188 residues: UPF0461 protein C5orf24 (188 aa).

Positions 1–10 (MMHPVASSNP) are enriched in polar residues. Residues 1 to 20 (MMHPVASSNPAFCGPGKPSC) are disordered. Ser-37 carries the post-translational modification Phosphoserine. Residue Lys-75 forms a Glycyl lysine isopeptide (Lys-Gly) (interchain with G-Cter in SUMO2) linkage. The segment at 79–142 (KKKKNLNRSG…GYKVSPGRPP (64 aa)) is disordered. Basic residues predominate over residues 80–92 (KKKNLNRSGKRGR). Polar residues predominate over residues 94–107 (SGTTKSAGYRTSTG). Ser-121 and Ser-180 each carry phosphoserine. Residue Lys-184 forms a Glycyl lysine isopeptide (Lys-Gly) (interchain with G-Cter in SUMO2) linkage.

It belongs to the UPF0461 family.

The polypeptide is UPF0461 protein C5orf24 (C5orf24) (Homo sapiens (Human)).